Here is a 232-residue protein sequence, read N- to C-terminus: Ubiquinone biosynthesis O-methyltransferase (232 aa).

Positions 36, 55, 76, and 120 each coordinate S-adenosyl-L-methionine.

Belongs to the methyltransferase superfamily. UbiG/COQ3 family.

It carries out the reaction a 3-demethylubiquinol + S-adenosyl-L-methionine = a ubiquinol + S-adenosyl-L-homocysteine + H(+). The enzyme catalyses a 3-(all-trans-polyprenyl)benzene-1,2-diol + S-adenosyl-L-methionine = a 2-methoxy-6-(all-trans-polyprenyl)phenol + S-adenosyl-L-homocysteine + H(+). It participates in cofactor biosynthesis; ubiquinone biosynthesis. O-methyltransferase that catalyzes the 2 O-methylation steps in the ubiquinone biosynthetic pathway. The polypeptide is Ubiquinone biosynthesis O-methyltransferase (Burkholderia mallei (strain ATCC 23344)).